A 306-amino-acid polypeptide reads, in one-letter code: Tryptophan 2,3-dioxygenase (306 aa).

The disordered stretch occupies residues 1–29 (MQPPGDDAAPRCPFAGAHAPDAPHVPEAA). Residues 75-79 (FIIQH), Y137, and R141 each bind substrate. H264 lines the heme pocket. T278 contacts substrate.

It belongs to the tryptophan 2,3-dioxygenase family. Homotetramer. Heme serves as cofactor.

The catalysed reaction is L-tryptophan + O2 = N-formyl-L-kynurenine. It functions in the pathway amino-acid degradation; L-tryptophan degradation via kynurenine pathway; L-kynurenine from L-tryptophan: step 1/2. Heme-dependent dioxygenase that catalyzes the oxidative cleavage of the L-tryptophan (L-Trp) pyrrole ring and converts L-tryptophan to N-formyl-L-kynurenine. Catalyzes the oxidative cleavage of the indole moiety. In Burkholderia mallei (strain NCTC 10247), this protein is Tryptophan 2,3-dioxygenase.